A 298-amino-acid chain; its full sequence is MNKNMSIVGVPMDLGADRRGVDMGPSAIRYAGVVARLEKMGFNIEDRGDIFVTLPHHFTETENHKYLDEVVEANEKLANVVSDIMTAGRFPLVLGGDHSIALGTIAGVAKHVKNLGVICLDAHGDLNTGATSPSGNIHGMPLAASLGYGHERLTNIGGYTPKVKAENVVIIGARDLDQGERELIKRIGMKVFTMHEIDKLGMARVMDEAIAHVSKNTDGVHLSLDLDGLDPHDAPGVGTPVIGGISYREGHVSLEMLADADILCSAEFVEVNPILDRENMTARVAVALMSSVFGDKLL.

Mn(2+) contacts are provided by His98, Asp121, His123, and Asp125. Residues 123 to 127 (HGDLN), 134 to 136 (SGN), and Asp177 contribute to the substrate site. Mn(2+)-binding residues include Asp225 and Asp227. Substrate-binding residues include Thr239 and Glu270.

This sequence belongs to the arginase family. The cofactor is Mn(2+).

The enzyme catalyses L-arginine + H2O = urea + L-ornithine. It functions in the pathway nitrogen metabolism; urea cycle; L-ornithine and urea from L-arginine: step 1/1. The protein is Arginase (rocF) of Brevibacillus brevis (Bacillus brevis).